Here is a 199-residue protein sequence, read N- to C-terminus: Small ribosomal subunit protein uS7 (199 aa).

This sequence belongs to the universal ribosomal protein uS7 family. In terms of assembly, part of the 30S ribosomal subunit.

In terms of biological role, one of the primary rRNA binding proteins, it binds directly to 16S rRNA where it nucleates assembly of the head domain of the 30S subunit. Is located at the subunit interface close to the decoding center. The chain is Small ribosomal subunit protein uS7 from Cenarchaeum symbiosum (strain A).